Here is a 306-residue protein sequence, read N- to C-terminus: Putative type I specificity subunit S.MpnORF285P (306 aa).

It belongs to the type-I restriction system S methylase family. The methyltransferase is composed of M and S polypeptides.

Its function is as follows. The specificity (S) subunit of a type I methyltransferase (MTase); this subunit dictates DNA sequence specificity. The single R subunit has multiple frameshifts and is probably not expressed. This chain is Putative type I specificity subunit S.MpnORF285P, found in Mycoplasma pneumoniae (strain ATCC 29342 / M129 / Subtype 1) (Mycoplasmoides pneumoniae).